Consider the following 96-residue polypeptide: ESAT-6-like protein SAG1039 (96 aa).

The protein belongs to the WXG100 family. sagEsxA-like subfamily. Homodimer.

The sequence is that of ESAT-6-like protein SAG1039 from Streptococcus agalactiae serotype V (strain ATCC BAA-611 / 2603 V/R).